A 271-amino-acid polypeptide reads, in one-letter code: Protein FAM110D (271 aa).

Residues methionine 1–arginine 13 are compositionally biased toward polar residues. 3 disordered regions span residues methionine 1–leucine 84, aspartate 118–arginine 149, and proline 186–threonine 242.

It belongs to the FAM110 family.

The protein is Protein FAM110D of Mus musculus (Mouse).